Here is an 835-residue protein sequence, read N- to C-terminus: Microcephalin (835 aa).

Residues 1 to 93 (MAAPILKDVV…AHIDESLFPA (93 aa)) enclose the BRCT 1 domain. Phosphoserine occurs at positions 279, 287, 296, and 333. Disordered stretches follow at residues 332–376 (LSPT…RKRS) and 417–442 (SPDNLKERNSENLPPESQLPSSPAQF). T335 is subject to Phosphothreonine. Residues 343 to 361 (LLIHSRPRSSSVKRKRVSH) are compositionally biased toward basic residues. S548 is subject to Phosphoserine. Residues 555–583 (AVDLKSTQNKGTTSKISNSSEGEAQSEHE) form a disordered region. The span at 559 to 577 (KSTQNKGTTSKISNSSEGE) shows a compositional bias: polar residues. 2 consecutive BRCT domains span residues 640-730 (SGRG…PFEL) and 751-833 (YRGT…NYLL).

In terms of assembly, interacts with CDC27 and maybe other components of the APC/C complex. Interacts with histone variant H2AX under DNA damage conditions.

The protein localises to the cytoplasm. It localises to the cytoskeleton. The protein resides in the microtubule organizing center. Its subcellular location is the centrosome. Functionally, implicated in chromosome condensation and DNA damage induced cellular responses. May play a role in neurogenesis and regulation of the size of the cerebral cortex. In Pan troglodytes (Chimpanzee), this protein is Microcephalin.